Reading from the N-terminus, the 357-residue chain is MAHDFSGLLNPSLLKMSAYSVEGGQQAEIKLNQNESPFDLPLWLKDEIMDEFKHEAWNRYPDILPFRGMKAYADFLGIAPESVMMSNGSNEMLYTIFLACLSKGRKVVIPEPSFSLYEKLAVLLQADIVDVPMHDDLTFDVDAIIARTNQERAGFVVLSTPNNPTSQSLRLDDVRRIVSGVEALVLVDEAYVEFSREESALTLIDEFPNLIILRTMSKALALAGMRIGFAITNPQLLSEIAKPKIPFTSGRLAEITLQHVLRHYSLVDDAVAYILRERNRLLGELSSVSAIHTFPSDANFIIIRVDDARHVFHALQDEGILVRNVSGYRLMENCLRFNIGLETENDLLLEKLHRMKG.

K218 carries the N6-(pyridoxal phosphate)lysine modification.

This sequence belongs to the class-II pyridoxal-phosphate-dependent aminotransferase family. Histidinol-phosphate aminotransferase subfamily. In terms of assembly, homodimer. The cofactor is pyridoxal 5'-phosphate.

The enzyme catalyses L-histidinol phosphate + 2-oxoglutarate = 3-(imidazol-4-yl)-2-oxopropyl phosphate + L-glutamate. It participates in amino-acid biosynthesis; L-histidine biosynthesis; L-histidine from 5-phospho-alpha-D-ribose 1-diphosphate: step 7/9. In Prosthecochloris aestuarii (strain DSM 271 / SK 413), this protein is Histidinol-phosphate aminotransferase.